A 356-amino-acid chain; its full sequence is Dihydroorotate dehydrogenase (quinone) (356 aa).

FMN contacts are provided by residues 66 to 70 (AGFDK) and threonine 90. Position 70 (lysine 70) interacts with substrate. 115–119 (NRMGF) provides a ligand contact to substrate. FMN is bound by residues asparagine 143 and asparagine 176. Asparagine 176 contacts substrate. The active-site Nucleophile is the serine 179. Substrate is bound at residue asparagine 181. FMN contacts are provided by lysine 212 and threonine 240. A substrate-binding site is contributed by 241–242 (NT). Residues glycine 266, glycine 295, and 316 to 317 (YT) each bind FMN.

It belongs to the dihydroorotate dehydrogenase family. Type 2 subfamily. Monomer. FMN is required as a cofactor.

The protein localises to the cell membrane. It carries out the reaction (S)-dihydroorotate + a quinone = orotate + a quinol. The protein operates within pyrimidine metabolism; UMP biosynthesis via de novo pathway; orotate from (S)-dihydroorotate (quinone route): step 1/1. Functionally, catalyzes the conversion of dihydroorotate to orotate with quinone as electron acceptor. This is Dihydroorotate dehydrogenase (quinone) from Rhodococcus opacus (strain B4).